A 617-amino-acid chain; its full sequence is Probable Xaa-Pro aminopeptidase P (617 aa).

Mn(2+)-binding residues include Asp414, Asp425, Glu523, and Glu537.

The protein belongs to the peptidase M24B family. Mn(2+) is required as a cofactor.

It catalyses the reaction Release of any N-terminal amino acid, including proline, that is linked to proline, even from a dipeptide or tripeptide.. Functionally, catalyzes the removal of a penultimate prolyl residue from the N-termini of peptides. This Ajellomyces capsulatus (strain NAm1 / WU24) (Darling's disease fungus) protein is Probable Xaa-Pro aminopeptidase P (AMPP).